The primary structure comprises 98 residues: TTCTSTQQTAAYTTLVSILSDSSFNKCASDSGYSMLTAKALPTTAQYKLMCASTACNTMIKKIVSLNPPNCDLTVPTSGLVLNVYEYANGFSTKCASL.

3 disulfide bridges follow: Cys-3–Cys-71, Cys-27–Cys-56, and Cys-51–Cys-95.

This sequence belongs to the elicitin family.

It localises to the secreted. Its function is as follows. Induces local and distal defense responses (incompatible hypersensitive reaction) in plants from the solanaceae and cruciferae families. Elicits leaf necrosis and causes the accumulation of pathogenesis-related proteins. Might interact with the lipidic molecules of the plasma membrane. This chain is Beta-elicitin DRE-beta, found in Phytophthora drechsleri.